The following is a 549-amino-acid chain: Neutral amino acid transporter 9 (549 aa).

The segment at 1 to 27 (MDEDSKPLLGSVPTGDYYTDSLDPKQR) is disordered. Topologically, residues 1–107 (MDEDSKPLLG…GGDSPIKNPS (107 aa)) are cytoplasmic. Residues 108–128 (IVTIFAIWNTMMGTSILSIPW) traverse the membrane as a helical segment. The interval 117–122 (TMMGTS) is important for arginine binding and amino acid transport. Ser122 is an arginine binding site. Residues 129-134 (GIKQAG) lie on the Lumenal side of the membrane. Residues 135 to 155 (FTLGIIIIVLMGLLTLYCCYR) traverse the membrane as a helical segment. Residues 156–186 (VLKSTKSIPYVDTSDWEFPDVCKYYFGGFGK) lie on the Cytoplasmic side of the membrane. A helical membrane pass occupies residues 187 to 213 (WSSLVFSLVSLIGAMVVYWVLMSNFLF). Topologically, residues 214–271 (NTGKFIFNYVHNVNTSDAFGTNGTERVICPYPDVDPHGNSSTSLYSGSDNSTGLEFDH) are lumenal. Asn227, Asn235, Asn252, and Asn263 each carry an N-linked (GlcNAc...) asparagine glycan. A disulfide bridge connects residues Cys242 and Cys412. Residues 272-288 (WWSKTNTIPFYLILLLL) form a helical membrane-spanning segment. Topologically, residues 289–297 (PLLNFRSAS) are cytoplasmic. Residues 298–322 (FFARFTFLGTISVIYLIFLVTYKAI) traverse the membrane as a helical segment. At 323–344 (QLGFHLEFHWFDSSMFFVPEFR) the chain is on the lumenal side. Residues 345-365 (TLFPQLSGVLTLAFFIHNCII) traverse the membrane as a helical segment. The Cytoplasmic segment spans residues 366-382 (TLMKNNKHQENNVRDLS). A helical transmembrane segment spans residues 383–403 (LAYLLVGLTYLYVGVLIFAAF). The Lumenal portion of the chain corresponds to 404–425 (PSPPLSKECIEPNFLDNFPSSD). A helical membrane pass occupies residues 426–446 (ILVFVARTFLLFQMTTVYPLL). The CARC motif signature appears at 432–442 (RTFLLFQMTTV). Positions 445-451 (LLGYLVR) match the CRAC motif motif. Over 447-467 (GYLVRVQLMGQIFGNHYPGFL) the chain is Cytoplasmic. A helical membrane pass occupies residues 468–488 (HVFVLNVFVVGAGVLMARFYP). Residues 489-495 (NIGSIIR) are Lumenal-facing. A helical transmembrane segment spans residues 496–516 (YSGALCGLALVFVLPSLIHMV). The Cytoplasmic portion of the chain corresponds to 517 to 528 (SLKRRGELRWTS). The chain crosses the membrane as a helical span at residues 529–549 (TLFHGFLILLGVANLLGQFFM).

Belongs to the amino acid/polyamine transporter 2 family. SLC38A9 subfamily. In terms of assembly, associated component of the Ragulator complex. Associated component of the Rag GTPases heterodimers (RRAGA and RRAGC). In terms of processing, glycosylated.

The protein localises to the lysosome membrane. It is found in the late endosome membrane. The catalysed reaction is L-leucine(in) = L-leucine(out). It catalyses the reaction L-tyrosine(in) = L-tyrosine(out). It carries out the reaction L-glutamine(out) = L-glutamine(in). The enzyme catalyses L-asparagine(out) = L-asparagine(in). With respect to regulation, amino acid transport activity is increased by sodium. Transport of L-glutamine, leucine and tyrosine is increased by arginine binding. Lysosomal amino acid transporter involved in the activation of mTORC1 in response to amino acid levels. Probably acts as an amino acid sensor of the Rag GTPases and Ragulator complexes, 2 complexes involved in amino acid sensing and activation of mTORC1, a signaling complex promoting cell growth in response to growth factors, energy levels, and amino acids. Following activation by amino acids, the Ragulator and Rag GTPases function as a scaffold recruiting mTORC1 to lysosomes where it is in turn activated. SLC38A9 mediates transport of amino acids with low capacity and specificity with a slight preference for polar amino acids. Acts as an arginine sensor. Following activation by arginine binding, mediates transport of L-glutamine, leucine and tyrosine with high efficiency, and is required for the efficient utilization of these amino acids after lysosomal protein degradation. However, the transport mechanism is not well defined and the role of sodium is not clear. Guanine exchange factor (GEF) that, upon arginine binding, stimulates GDP release from RRAGA and therefore activates the Rag GTPase heterodimer and the mTORC1 pathway in response to nutrient sufficiency. The chain is Neutral amino acid transporter 9 from Danio rerio (Zebrafish).